Here is a 720-residue protein sequence, read N- to C-terminus: Polyribonucleotide nucleotidyltransferase (720 aa).

Residues aspartate 487 and aspartate 493 each coordinate Mg(2+). The KH domain maps to 554 to 613 (PRIETFKIPTDKIREVIGTGGKVIREIVEKTGAKVNIEDDGTVKVASSDGEAMKAAIKWI). The S1 motif domain occupies 623 to 691 (GQIYDGTVVK…DRGKTRLSMK (69 aa)). The disordered stretch occupies residues 692-720 (AVDQTTGEDLEAKQKAEGGAEAPREAAGE). Positions 701-720 (LEAKQKAEGGAEAPREAAGE) are enriched in basic and acidic residues.

Belongs to the polyribonucleotide nucleotidyltransferase family. Requires Mg(2+) as cofactor.

It is found in the cytoplasm. It carries out the reaction RNA(n+1) + phosphate = RNA(n) + a ribonucleoside 5'-diphosphate. In terms of biological role, involved in mRNA degradation. Catalyzes the phosphorolysis of single-stranded polyribonucleotides processively in the 3'- to 5'-direction. The sequence is that of Polyribonucleotide nucleotidyltransferase from Bradyrhizobium sp. (strain BTAi1 / ATCC BAA-1182).